The chain runs to 82 residues: Small, acid-soluble spore protein gamma-type (82 aa).

2 stretches are compositionally biased toward polar residues: residues Met1–Gln24 and Ala32–Gly50. The disordered stretch occupies residues Met1–Ser82. Repeats lie at residues Gln19 to Gln45 and Gln46 to Gln72. Residues Gln69–Ser82 show a composition bias toward low complexity.

Belongs to the gamma-type SASP family.

Functionally, SASP are bound to spore DNA. They are double-stranded DNA-binding proteins that cause DNA to change to an a-like conformation. They protect the DNA backbone from chemical and enzymatic cleavage and are thus involved in dormant spore's high resistance to UV light. The protein is Small, acid-soluble spore protein gamma-type of Bacillus subtilis.